We begin with the raw amino-acid sequence, 180 residues long: ATP-dependent Clp protease proteolytic subunit 2 (180 aa).

The active-site Nucleophile is the serine 86. The active site involves histidine 111.

It belongs to the peptidase S14 family. In terms of assembly, fourteen ClpP subunits assemble into 2 heptameric rings which stack back to back to give a disk-like structure with a central cavity, resembling the structure of eukaryotic proteasomes.

It is found in the cytoplasm. It carries out the reaction Hydrolysis of proteins to small peptides in the presence of ATP and magnesium. alpha-casein is the usual test substrate. In the absence of ATP, only oligopeptides shorter than five residues are hydrolyzed (such as succinyl-Leu-Tyr-|-NHMec, and Leu-Tyr-Leu-|-Tyr-Trp, in which cleavage of the -Tyr-|-Leu- and -Tyr-|-Trp bonds also occurs).. In terms of biological role, cleaves peptides in various proteins in a process that requires ATP hydrolysis. Has a chymotrypsin-like activity. Plays a major role in the degradation of misfolded proteins. The chain is ATP-dependent Clp protease proteolytic subunit 2 from Tropheryma whipplei (strain Twist) (Whipple's bacillus).